The primary structure comprises 393 residues: NAD(P)H-quinone oxidoreductase subunit H, chloroplastic (393 aa).

It belongs to the complex I 49 kDa subunit family. As to quaternary structure, NDH is composed of at least 16 different subunits, 5 of which are encoded in the nucleus.

Its subcellular location is the plastid. The protein resides in the chloroplast thylakoid membrane. The enzyme catalyses a plastoquinone + NADH + (n+1) H(+)(in) = a plastoquinol + NAD(+) + n H(+)(out). It carries out the reaction a plastoquinone + NADPH + (n+1) H(+)(in) = a plastoquinol + NADP(+) + n H(+)(out). Functionally, NDH shuttles electrons from NAD(P)H:plastoquinone, via FMN and iron-sulfur (Fe-S) centers, to quinones in the photosynthetic chain and possibly in a chloroplast respiratory chain. The immediate electron acceptor for the enzyme in this species is believed to be plastoquinone. Couples the redox reaction to proton translocation, and thus conserves the redox energy in a proton gradient. This Trifolium subterraneum (Subterranean clover) protein is NAD(P)H-quinone oxidoreductase subunit H, chloroplastic.